The primary structure comprises 219 residues: Holliday junction branch migration complex subunit RuvA (219 aa).

Residues 1-71 (MISWIKGELV…EDSDMLFGFS (71 aa)) are domain I. The domain II stretch occupies residues 72–150 (TKDQRDFFIQ…NKEIEKENLN (79 aa)). Residues 151-161 (INNFLEKNKDL) are flexible linker. Positions 161-219 (LDSIFKDIDLTLQSLNYSKKEIKNLFPKLINNIKNSSLEKESISFENLLKEAMNYLDHK) are domain III.

This sequence belongs to the RuvA family. In terms of assembly, homotetramer. Forms an RuvA(8)-RuvB(12)-Holliday junction (HJ) complex. HJ DNA is sandwiched between 2 RuvA tetramers; dsDNA enters through RuvA and exits via RuvB. An RuvB hexamer assembles on each DNA strand where it exits the tetramer. Each RuvB hexamer is contacted by two RuvA subunits (via domain III) on 2 adjacent RuvB subunits; this complex drives branch migration. In the full resolvosome a probable DNA-RuvA(4)-RuvB(12)-RuvC(2) complex forms which resolves the HJ.

The protein localises to the cytoplasm. In terms of biological role, the RuvA-RuvB-RuvC complex processes Holliday junction (HJ) DNA during genetic recombination and DNA repair, while the RuvA-RuvB complex plays an important role in the rescue of blocked DNA replication forks via replication fork reversal (RFR). RuvA specifically binds to HJ cruciform DNA, conferring on it an open structure. The RuvB hexamer acts as an ATP-dependent pump, pulling dsDNA into and through the RuvAB complex. HJ branch migration allows RuvC to scan DNA until it finds its consensus sequence, where it cleaves and resolves the cruciform DNA. The chain is Holliday junction branch migration complex subunit RuvA from Prochlorococcus marinus subsp. pastoris (strain CCMP1986 / NIES-2087 / MED4).